The following is a 177-amino-acid chain: ATP synthase subunit delta (177 aa).

It belongs to the ATPase delta chain family. In terms of assembly, F-type ATPases have 2 components, F(1) - the catalytic core - and F(0) - the membrane proton channel. F(1) has five subunits: alpha(3), beta(3), gamma(1), delta(1), epsilon(1). F(0) has three main subunits: a(1), b(2) and c(10-14). The alpha and beta chains form an alternating ring which encloses part of the gamma chain. F(1) is attached to F(0) by a central stalk formed by the gamma and epsilon chains, while a peripheral stalk is formed by the delta and b chains.

Its subcellular location is the cell inner membrane. Functionally, f(1)F(0) ATP synthase produces ATP from ADP in the presence of a proton or sodium gradient. F-type ATPases consist of two structural domains, F(1) containing the extramembraneous catalytic core and F(0) containing the membrane proton channel, linked together by a central stalk and a peripheral stalk. During catalysis, ATP synthesis in the catalytic domain of F(1) is coupled via a rotary mechanism of the central stalk subunits to proton translocation. In terms of biological role, this protein is part of the stalk that links CF(0) to CF(1). It either transmits conformational changes from CF(0) to CF(1) or is implicated in proton conduction. This chain is ATP synthase subunit delta, found in Shigella boydii serotype 18 (strain CDC 3083-94 / BS512).